The following is a 1031-amino-acid chain: uncharacterized protein (1031 aa).

The segment at 50–85 adopts an SWIM-type zinc-finger fold; it reads FKVQINLKTAAAHLDCSCSNDKQNCVHIIAALLKYN. The Helicase ATP-binding domain maps to 590–751; the sequence is RALEDNQFGG…WSCFDFVLPN (162 aa). 603-610 is a binding site for ATP; sequence DEMGLGKT. The DEAQ box signature appears at 702–705; that stretch reads DEAQ. Residues 868–1022 form the Helicase C-terminal domain; it reads ALNIIYEALE…EDVNFFKSLS (155 aa).

It belongs to the SNF2/RAD54 helicase family.

This is an uncharacterized protein from Mycoplasma genitalium (strain ATCC 33530 / DSM 19775 / NCTC 10195 / G37) (Mycoplasmoides genitalium).